The primary structure comprises 435 residues: Protein phosphatase 2C homolog 2 (435 aa).

A PPM-type phosphatase domain is found at 23-298 (IYGVSAMQGW…DNMTMIIIGL (276 aa)). Positions 71, 72, 240, and 289 each coordinate Mn(2+). Positions 366 to 435 (DQTEEDRDLP…TSGAPEKSTS (70 aa)) are disordered. Over residues 381–392 (ELPDSARNEREG) the composition is skewed to basic and acidic residues. A compositionally biased stretch (low complexity) spans 409–418 (GSSASTSEST). Residues 419-435 (VTPAGSSTSGAPEKSTS) show a composition bias toward polar residues.

Belongs to the PP2C family. Mg(2+) is required as a cofactor. It depends on Mn(2+) as a cofactor.

It is found in the cytoplasm. The protein resides in the nucleus. The catalysed reaction is O-phospho-L-seryl-[protein] + H2O = L-seryl-[protein] + phosphate. The enzyme catalyses O-phospho-L-threonyl-[protein] + H2O = L-threonyl-[protein] + phosphate. Dephosphorylating regulator for many key proteins. Dephosphorylates phosphoglycerate kinase pgk1 at least on 'Ser-203' to negatively regulate targeting of pgk1 to the mitochondrion, thereby negatively regulating production of acetyl-CoA and consequently aflatoxin biosynthesis. This chain is Protein phosphatase 2C homolog 2, found in Aspergillus flavus (strain ATCC 200026 / FGSC A1120 / IAM 13836 / NRRL 3357 / JCM 12722 / SRRC 167).